A 271-amino-acid polypeptide reads, in one-letter code: Histone chaperone asf-1 (271 aa).

The interval 152-271 (KWDSEASAPP…PKQQGMAMAQ (120 aa)) is disordered. 2 stretches are compositionally biased toward acidic residues: residues 168-185 (PEADEVADEEEYGADELA) and 211-258 (IEED…EMEI).

It belongs to the ASF1 family. Interacts with histone H3 and histone H4.

It localises to the nucleus. In terms of biological role, histone chaperone that facilitates histone deposition and histone exchange and removal during nucleosome assembly and disassembly. In Neurospora crassa (strain ATCC 24698 / 74-OR23-1A / CBS 708.71 / DSM 1257 / FGSC 987), this protein is Histone chaperone asf-1 (asf-1).